The following is a 93-amino-acid chain: UPF0367 protein gsr3177 (93 aa).

This sequence belongs to the UPF0367 family.

The protein is UPF0367 protein gsr3177 of Gloeobacter violaceus (strain ATCC 29082 / PCC 7421).